The following is a 201-amino-acid chain: NADH-quinone oxidoreductase subunit C (201 aa).

It belongs to the complex I 30 kDa subunit family. In terms of assembly, NDH-1 is composed of 14 different subunits. Subunits NuoB, C, D, E, F, and G constitute the peripheral sector of the complex.

Its subcellular location is the cell inner membrane. The catalysed reaction is a quinone + NADH + 5 H(+)(in) = a quinol + NAD(+) + 4 H(+)(out). In terms of biological role, NDH-1 shuttles electrons from NADH, via FMN and iron-sulfur (Fe-S) centers, to quinones in the respiratory chain. The immediate electron acceptor for the enzyme in this species is believed to be ubiquinone. Couples the redox reaction to proton translocation (for every two electrons transferred, four hydrogen ions are translocated across the cytoplasmic membrane), and thus conserves the redox energy in a proton gradient. This is NADH-quinone oxidoreductase subunit C from Ruegeria sp. (strain TM1040) (Silicibacter sp.).